A 301-amino-acid chain; its full sequence is Probable alpha-L-glutamate ligase 1 (301 aa).

The 184-residue stretch at 104 to 287 (LQLLSRKGIG…VTEPIVEYIE (184 aa)) folds into the ATP-grasp domain. Residues Lys141, 178-179 (EY), Asp187, and 211-213 (RSN) each bind ATP. The Mg(2+) site is built by Asp248, Glu260, and Asn262. Positions 248, 260, and 262 each coordinate Mn(2+).

Belongs to the RimK family. It depends on Mg(2+) as a cofactor. Mn(2+) is required as a cofactor.

The chain is Probable alpha-L-glutamate ligase 1 from Shewanella sp. (strain ANA-3).